The sequence spans 529 residues: Tyrosine--tRNA ligase, cytoplasmic (529 aa).

Residue Tyr39 participates in L-tyrosine binding. The 'HIGH' region signature appears at 44-52 (TTGKPHVAY). Tyr166, Gln170, Asp173, and Gln188 together coordinate L-tyrosine. Residues 222-226 (KMSSS) carry the 'KMSKS' region motif. The Nuclear localization signal signature appears at 242–247 (KKKLKK). Residues 335-362 (KLTSSAYPEPSKNKGGVKGNPKQTTDDD) are disordered. The region spanning 365 to 469 (IPSRLDIRVG…EGSAAGDRVY (105 aa)) is the tRNA-binding domain.

Belongs to the class-I aminoacyl-tRNA synthetase family. As to quaternary structure, homodimer.

Its subcellular location is the cytoplasm. It localises to the nucleus. It catalyses the reaction tRNA(Tyr) + L-tyrosine + ATP = L-tyrosyl-tRNA(Tyr) + AMP + diphosphate + H(+). Catalyzes the attachment of tyrosine to tRNA(Tyr) in a two-step reaction: tyrosine is first activated by ATP to form Tyr-AMP and then transferred to the acceptor end of tRNA(Tyr). The sequence is that of Tyrosine--tRNA ligase, cytoplasmic (yars1) from Danio rerio (Zebrafish).